A 421-amino-acid polypeptide reads, in one-letter code: F-box only protein 5 (421 aa).

S85 bears the Phosphoserine mark. The tract at residues 114–219 (ELEASRLYED…IGKKMGLEHL (106 aa)) is interaction with EVI5. Positions 223–273 (AELSRRGFVHLLANILTKLSGMDLVNLSKVSRIWKKILENNKGAFQLYSKT) constitute an F-box domain. A sufficient for interaction with RPS6KA2; Prevents association of CDC20 with RPS6KA2 region spans residues 236-313 (NILTKLSGMD…KSSTWAPPKK (78 aa)). The requires for efficient binding to CDC20 stretch occupies residues 236–383 (NILTKLSGMD…SCQFEYCTKC (148 aa)). The interval 280–421 (SSKLSLHATT…KKSKKNLQRL (142 aa)) is inhibits APC ubiquitin ligase activity. The competitively blocks access of APC substrates to the D-box coreceptor formed by FZR1 and ANAPC10 stretch occupies residues 296–299 (RAAL). Residues 348-396 (SLKACVRCNFPAKYDHYLERAVCKRESCQFEYCTKCLCAYHNNKDCLNG) form a ZBR-type zinc finger. C352, C355, C370, C375, C380, C383, H388, and C393 together coordinate Zn(2+). The allows a rapid multiple mono-ubiquitination of the APC substrate, but strongly inhibits the slow ubiquitin chain elongation catalyzed by UBCH10 stretch occupies residues 352 to 394 (CVRCNFPAKYDHYLERAVCKRESCQFEYCTKCLCAYHNNKDCL). The sufficient to suppress UBE2S activity; essential for interaction with UBE2S; competitively inhibits the rapide ubiquitin chain elongation by UBE2D1 which blocks UBE2D1 with APC; indispensable for recruitment and position of FBXO5 to the catalytic site of APC; abrogates the inhibition of ubiquitin chain assembly primarily catalyzed by UBE2S; inhibits the ubiquitination by either UBE2C or UBE2D1 stretch occupies residues 411 to 421 (TKKSKKNLQRL).

Part of a SCF (SKP1-cullin-F-box) protein ligase complex. Interacts with BTRC; mediates proteolysis by the SCF ubiquitin ligase complex leading to activation of APC in late mitosis and subsequent mitotic progression. Interacts with FZR1/CDH1 and the N-terminal substrate-binding domain of CDC20; prevents APC activation. Also interacts with EVI5 which blocks its phosphorylation by PLK1 and prevents its subsequent binding to BTRC and degradation. Interacts simultaneously with anaphase promoting complex (APC), through at least ANAPC2, CDC23, CDC27, the APC substrate GMNN and the APC activator FZR1. Interacts with UBE2S; interferes with the activity of UBE2S mainly by disrupting the dynamic electrostatic association between the C-terminal tail of UBE2S and ANAPC2. Interacts with RPS6KA2; cooperates to induce the metaphase arrest of early blastomeres; increases and stabilizes interaction of FBXO5 with CDC20. Phosphorylation by CDK2 and subsequently by PLK1 triggers degradation during early mitosis through ubiquitin-mediated proteolysis by the SCF ubiquitin ligase complex containing the F-box protein BTRC. This degradation is necessary for the activation of APC in late mitosis and subsequent mitotic progression. Phosphorylated by RPS6KA2; increases and stabilizes interaction with CDC20. In terms of processing, ubiquitinated by the SCF(BTRC) complex following phosphorylation by PLK1. Undergoes both 'Lys-11' and 'Lys-48'-linked polyubiquitination by APC-FZR1 complex leading to degradation during G1 phase by the proteasome. Degraded through the SCF(BTRC) complex; degradation occurs during oocyte maturation, between germinal vesicle breakdown (GVBD) and meiosis I, and is required for the meiosis I-meiosis II transition. In terms of tissue distribution, expressed in oocytes and granulosa cells. Expressed in proliferating cells compartments in hair follicle and skin epidermis, spermatogonia, and intestinal crypts.

It is found in the nucleus. The protein resides in the cytoplasm. Its subcellular location is the cytoskeleton. It localises to the spindle. It functions in the pathway protein modification; protein ubiquitination. In terms of biological role, regulator of APC activity during mitotic and meiotic cell cycle. During mitotic cell cycle plays a role as both substrate and inhibitor of APC-FZR1 complex. During G1 phase, plays a role as substrate of APC-FZR1 complex E3 ligase. Then switches as an inhibitor of APC-FZR1 complex during S and G2 leading to cell-cycle commitment. As APC inhibitor, prevents the degradation of APC substrates at multiple levels: by interacting with APC and blocking access of APC substrates to the D-box co-receptor, formed by FZR1 and ANAPC10; by suppressing ubiquitin ligation and chain elongation by APC by preventing the UBE2C and UBE2S activities. Plays a role in genome integrity preservation by coordinating DNA replication with mitosis through APC inhibition in interphase to stabilize CCNA2 and GMNN in order to promote mitosis and prevent rereplication and DNA damage-induced cellular senescence. During oocyte maturation, plays a role in meiosis through inactivation of APC-FZR1 complex. Inhibits APC through RPS6KA2 interaction that increases FBXO5 affiniy for CDC20 leading to the metaphase arrest of the second meiotic division before fertilization. Controls entry into the first meiotic division through inactivation of APC-FZR1 complex. Promotes migration and osteogenic differentiation of mesenchymal stem cells. The sequence is that of F-box only protein 5 from Mus musculus (Mouse).